The chain runs to 235 residues: Isoprenyl transferase (235 aa).

The active site involves Asp21. Asp21 is a Mg(2+) binding site. Residues 22–25 (GNAR), Trp26, Lys34, His38, and 66–68 (SSE) each bind substrate. Residue Asn69 is the Proton acceptor of the active site. Residues Trp70, Arg72, Arg183, and 189 to 191 (RIS) each bind substrate. Glu202 is a binding site for Mg(2+).

Belongs to the UPP synthase family. In terms of assembly, homodimer. The cofactor is Mg(2+).

Catalyzes the condensation of isopentenyl diphosphate (IPP) with allylic pyrophosphates generating different type of terpenoids. The protein is Isoprenyl transferase of Rickettsia felis (strain ATCC VR-1525 / URRWXCal2) (Rickettsia azadi).